A 263-amino-acid polypeptide reads, in one-letter code: Undecaprenyl-diphosphatase 2 (263 aa).

8 helical membrane passes run 15-37 (GLTE…LIGF), 42-62 (AKVF…VIFW), 79-99 (SLNL…GVLF), 107-127 (LFGP…MIVA), 142-162 (ITYK…WPGF), 183-203 (AEYT…LDLI), 216-236 (LFVT…VSFL), and 242-262 (VKLT…YFFI).

The protein belongs to the UppP family.

The protein localises to the cell membrane. The catalysed reaction is di-trans,octa-cis-undecaprenyl diphosphate + H2O = di-trans,octa-cis-undecaprenyl phosphate + phosphate + H(+). Functionally, catalyzes the dephosphorylation of undecaprenyl diphosphate (UPP). Confers resistance to bacitracin. This is Undecaprenyl-diphosphatase 2 from Bacillus cereus (strain ATCC 14579 / DSM 31 / CCUG 7414 / JCM 2152 / NBRC 15305 / NCIMB 9373 / NCTC 2599 / NRRL B-3711).